The sequence spans 914 residues: WAG22 antigen (914 aa).

The region spanning 1–93 is the PE domain; that stretch reads MSFVIAVPET…GGAYAAAEAA (93 aa). 2 disordered regions span residues 412-431 and 895-914; these read GGSG…AGGA and AGAG…HGLT. Over residues 895-904 the composition is skewed to gly residues; that stretch reads AGAGGAGGLV.

This sequence belongs to the mycobacterial PE family. PGRS subfamily.

This is WAG22 antigen (wag22) from Mycobacterium bovis (strain ATCC BAA-935 / AF2122/97).